Consider the following 148-residue polypeptide: Transcriptional regulator MraZ (148 aa).

SpoVT-AbrB domains lie at 5 to 51 and 80 to 123; these read VATV…PLPE and AHDI…NEAR.

Belongs to the MraZ family. In terms of assembly, forms oligomers.

Its subcellular location is the cytoplasm. It localises to the nucleoid. In Thiobacillus denitrificans (strain ATCC 25259 / T1), this protein is Transcriptional regulator MraZ.